We begin with the raw amino-acid sequence, 114 residues long: uncharacterized protein (114 aa).

The ABM domain maps to 13-99 (YYAVIFSSVK…VWYESYAVRV (87 aa)).

This is an uncharacterized protein from Bacillus subtilis (strain 168).